The chain runs to 78 residues: Large ribosomal subunit protein bL28 (78 aa).

Residues 1 to 30 (MAAHCQVTGAGPGFGHSISHSHRRTKRRFD) form a disordered region.

Belongs to the bacterial ribosomal protein bL28 family.

The protein is Large ribosomal subunit protein bL28 of Micrococcus luteus (strain ATCC 4698 / DSM 20030 / JCM 1464 / CCM 169 / CCUG 5858 / IAM 1056 / NBRC 3333 / NCIMB 9278 / NCTC 2665 / VKM Ac-2230) (Micrococcus lysodeikticus).